We begin with the raw amino-acid sequence, 517 residues long: Splicing factor U2AF 59 kDa subunit (517 aa).

The segment covering 1 to 13 (MDLSSRLSSGSSR) has biased composition (low complexity). Residues 1–112 (MDLSSRLSSG…PSRERSVRSI (112 aa)) form a disordered region. Residues 20–89 (DYRDEEPRRE…RRYDDYEPRS (70 aa)) are compositionally biased toward basic and acidic residues. RRM domains are found at residues 310 to 388 (DKIY…FACV) and 418 to 509 (RVLQ…FYGE).

The protein belongs to the splicing factor SR family. In terms of assembly, forms a heterodimer with the U2AF small subunit. Can also form a homodimer. U2AF large subunit (U2AF59), U2AF small subunit (U2AF23) and SF1 (bpb1) interact to form a complex required for complex A formation. Interacts with wat1/pop3.

Its subcellular location is the nucleus. In terms of biological role, necessary for the splicing of pre-mRNA. The SF1-U2AF59-U2AF23 complex has a role in the recognition of the branch site (5'-UACUAAC-3'), the pyrimidine tract and the 3'-splice site at the 3'-end of introns. The polypeptide is Splicing factor U2AF 59 kDa subunit (prp2) (Schizosaccharomyces pombe (strain 972 / ATCC 24843) (Fission yeast)).